The sequence spans 229 residues: Heptaprenylglyceryl phosphate synthase (229 aa).

K12 provides a ligand contact to sn-glycerol 1-phosphate. The Mg(2+) site is built by D14 and S40. Sn-glycerol 1-phosphate is bound by residues 159–164, G189, and 209–210; these read YLEYSG and GN.

Belongs to the GGGP/HepGP synthase family. Group I subfamily. In terms of assembly, homodimer. It depends on Mg(2+) as a cofactor.

It catalyses the reaction sn-glycerol 1-phosphate + all-trans-heptaprenyl diphosphate = 3-heptaprenyl-sn-glycero-1-phosphate + diphosphate. Its pathway is membrane lipid metabolism; glycerophospholipid metabolism. Functionally, prenyltransferase that catalyzes in vivo the transfer of the heptaprenyl moiety of heptaprenyl pyrophosphate (HepPP; 35 carbon atoms) to the C3 hydroxyl of sn-glycerol-1-phosphate (G1P), producing heptaprenylglyceryl phosphate (HepGP). This reaction is an ether-bond-formation step in the biosynthesis of archaea-type G1P-based membrane lipids found in Bacillales. This is Heptaprenylglyceryl phosphate synthase from Bacillus cereus (strain ATCC 10987 / NRS 248).